We begin with the raw amino-acid sequence, 247 residues long: Probable transcriptional regulatory protein TDE_1487 (247 aa).

This sequence belongs to the TACO1 family.

Its subcellular location is the cytoplasm. The protein is Probable transcriptional regulatory protein TDE_1487 of Treponema denticola (strain ATCC 35405 / DSM 14222 / CIP 103919 / JCM 8153 / KCTC 15104).